The sequence spans 304 residues: ATP phosphoribosyltransferase (304 aa).

Belongs to the ATP phosphoribosyltransferase family. Long subfamily. Mg(2+) is required as a cofactor.

The protein resides in the cytoplasm. It carries out the reaction 1-(5-phospho-beta-D-ribosyl)-ATP + diphosphate = 5-phospho-alpha-D-ribose 1-diphosphate + ATP. The protein operates within amino-acid biosynthesis; L-histidine biosynthesis; L-histidine from 5-phospho-alpha-D-ribose 1-diphosphate: step 1/9. Its activity is regulated as follows. Feedback inhibited by histidine. Its function is as follows. Catalyzes the condensation of ATP and 5-phosphoribose 1-diphosphate to form N'-(5'-phosphoribosyl)-ATP (PR-ATP). Has a crucial role in the pathway because the rate of histidine biosynthesis seems to be controlled primarily by regulation of HisG enzymatic activity. The sequence is that of ATP phosphoribosyltransferase from Xylella fastidiosa (strain 9a5c).